Here is a 220-residue protein sequence, read N- to C-terminus: Deoxyribose-phosphate aldolase (220 aa).

The active-site Proton donor/acceptor is the aspartate 89. The active-site Schiff-base intermediate with acetaldehyde is lysine 151. The Proton donor/acceptor role is filled by lysine 180.

This sequence belongs to the DeoC/FbaB aldolase family. DeoC type 1 subfamily.

It is found in the cytoplasm. The catalysed reaction is 2-deoxy-D-ribose 5-phosphate = D-glyceraldehyde 3-phosphate + acetaldehyde. Its pathway is carbohydrate degradation; 2-deoxy-D-ribose 1-phosphate degradation; D-glyceraldehyde 3-phosphate and acetaldehyde from 2-deoxy-alpha-D-ribose 1-phosphate: step 2/2. In terms of biological role, catalyzes a reversible aldol reaction between acetaldehyde and D-glyceraldehyde 3-phosphate to generate 2-deoxy-D-ribose 5-phosphate. The chain is Deoxyribose-phosphate aldolase from Streptococcus suis (strain 98HAH33).